We begin with the raw amino-acid sequence, 87 residues long: Putative acyl-CoA-binding protein (87 aa).

In terms of domain architecture, ACB spans 1–86 (MSSTFEQAAA…VDELKTKYGM (86 aa)). Residues Lys-13, 28–32 (YALFK), Lys-50, Lys-54, and Tyr-73 each bind an acyl-CoA.

This sequence belongs to the ACBP family.

The protein localises to the cytoplasm. It localises to the nucleus. Binds medium- and long-chain acyl-CoA esters with very high affinity and may function as an intracellular carrier of acyl-CoA esters. May enhance the activity of the ceramide synthase complex. This is Putative acyl-CoA-binding protein from Schizosaccharomyces pombe (strain 972 / ATCC 24843) (Fission yeast).